The sequence spans 109 residues: MKVLVLFSVLFLTLFSYSSTEAIDEFDSDAEEDMLSLMANEQVRAKACTPRLHDCSHDRHSCCRGELFKDVCYCFYPEGEDKTEVCSCQQPKSHKYIEKVVDKAKTVVG.

The signal sequence occupies residues 1 to 22 (MKVLVLFSVLFLTLFSYSSTEA). The propeptide occupies 23-44 (IDEFDSDAEEDMLSLMANEQVR). The knottin domain stretch occupies residues 45 to 88 (AKACTPRLHDCSHDRHSCCRGELFKDVCYCFYPEGEDKTEVCSC). Disulfide bonds link C48-C63, C55-C72, C62-C88, and C74-C86. Residues 89–108 (QQPKSHKYIEKVVDKAKTVV) are linear cationic cytotoxin domain.

This sequence belongs to the neurotoxin 19 (CSTX) family. 05 (U4-Lctx) subfamily. In terms of tissue distribution, expressed by the venom gland.

It is found in the secreted. Enhances the high-affinity desensitization of human P2RX3 purinoceptors. In Lycosa singoriensis (Wolf spider), this protein is U4-lycotoxin-Ls1a.